Here is a 222-residue protein sequence, read N- to C-terminus: 2-C-methyl-D-erythritol 4-phosphate cytidylyltransferase (222 aa).

The protein belongs to the IspD/TarI cytidylyltransferase family. IspD subfamily.

It catalyses the reaction 2-C-methyl-D-erythritol 4-phosphate + CTP + H(+) = 4-CDP-2-C-methyl-D-erythritol + diphosphate. It functions in the pathway isoprenoid biosynthesis; isopentenyl diphosphate biosynthesis via DXP pathway; isopentenyl diphosphate from 1-deoxy-D-xylulose 5-phosphate: step 2/6. Catalyzes the formation of 4-diphosphocytidyl-2-C-methyl-D-erythritol from CTP and 2-C-methyl-D-erythritol 4-phosphate (MEP). This Porphyromonas gingivalis (strain ATCC 33277 / DSM 20709 / CIP 103683 / JCM 12257 / NCTC 11834 / 2561) protein is 2-C-methyl-D-erythritol 4-phosphate cytidylyltransferase.